Reading from the N-terminus, the 131-residue chain is Small ribosomal subunit protein uS8 (131 aa).

Belongs to the universal ribosomal protein uS8 family. Part of the 30S ribosomal subunit. Contacts proteins S5 and S12.

In terms of biological role, one of the primary rRNA binding proteins, it binds directly to 16S rRNA central domain where it helps coordinate assembly of the platform of the 30S subunit. This is Small ribosomal subunit protein uS8 from Laribacter hongkongensis (strain HLHK9).